Here is a 336-residue protein sequence, read N- to C-terminus: Phosphate acyltransferase (336 aa).

Belongs to the PlsX family. As to quaternary structure, homodimer. Probably interacts with PlsY.

The protein localises to the cytoplasm. It carries out the reaction a fatty acyl-[ACP] + phosphate = an acyl phosphate + holo-[ACP]. The protein operates within lipid metabolism; phospholipid metabolism. Catalyzes the reversible formation of acyl-phosphate (acyl-PO(4)) from acyl-[acyl-carrier-protein] (acyl-ACP). This enzyme utilizes acyl-ACP as fatty acyl donor, but not acyl-CoA. The polypeptide is Phosphate acyltransferase (Pseudomonas putida (strain ATCC 700007 / DSM 6899 / JCM 31910 / BCRC 17059 / LMG 24140 / F1)).